A 539-amino-acid polypeptide reads, in one-letter code: Zinc finger and BTB domain-containing protein 7B (539 aa).

A BTB domain is found at C34 to S115. S150 bears the Phosphoserine mark. A disordered region spans residues A171–D308. Pro residues predominate over residues P182–P196. The segment covering V197–K206 has biased composition (basic residues). K206 and K212 each carry N6-acetyllysine; by EP300; alternate. Glycyl lysine isopeptide (Lys-Gly) (interchain with G-Cter in ubiquitin); alternate cross-links involve residues K206 and K212. The segment covering Y273–L282 has biased composition (acidic residues). K335 is modified (N6-acetyllysine; by EP300; alternate). K335 participates in a covalent cross-link: Glycyl lysine isopeptide (Lys-Gly) (interchain with G-Cter in ubiquitin); alternate. Positions M344–R400 are required for interaction with and acetylation by EP300. The C2H2-type 1 zinc finger occupies Q346–H368. T369 carries the phosphothreonine modification. 2 C2H2-type zinc fingers span residues F374–H396 and Y402–H424. The C2H2-type 4; atypical zinc-finger motif lies at Y430–C454. Disordered stretches follow at residues R458 to L486 and F501 to S539. The span at T508 to P517 shows a compositional bias: pro residues.

As to quaternary structure, homodimerizes. Interacts with NCL, NEDD4 and YBX1. Interacts with HNRNPU (via RNA-binding RGG-box region); the interaction facilitates the recruitment of long non-coding RNA Blnc1 by ZBTB7B. Interacts with HDAC4 and HDAC5; the interaction allows the recruitment of HDAC4 and HDAC5 on CD8 loci for deacetylation and possible inhibition of CD8 genes expression. Post-translationally, acetylated directly and specifically by EP300. EP300-mediated acetylation of Lys-206, Lys-212 and Lys-335 stabilizes the protein by antagonizing ubiquitin conjugation. Ubiquitinated, leading to proteasomal degradation. Competes with acetylation on Lys-206, Lys-212 and Lys-335.

The protein resides in the nucleus. Its function is as follows. Transcription regulator that acts as a key regulator of lineage commitment of immature T-cell precursors. Exerts distinct biological functions in the mammary epithelial cells and T cells in a tissue-specific manner. Necessary and sufficient for commitment of CD4 lineage, while its absence causes CD8 commitment. Development of immature T-cell precursors (thymocytes) to either the CD4 helper or CD8 killer T-cell lineages correlates precisely with their T-cell receptor specificity for major histocompatibility complex class II or class I molecules, respectively. Cross-antagonism between ZBTB7B and CBF complexes are determinative to CD4 versus CD8 cell fate decision. Suppresses RUNX3 expression and imposes CD4+ lineage fate by inducing the SOCS suppressors of cytokine signaling. induces, as a transcriptional activator, SOCS genes expression which represses RUNX3 expression and promotes the CD4+ lineage fate. During CD4 lineage commitment, associates with multiple sites at the CD8 locus, acting as a negative regulator of the CD8 promoter and enhancers by epigenetic silencing through the recruitment of class II histone deacetylases, such as HDAC4 and HDAC5, to these loci. Regulates the development of IL17-producing CD1d-restricted naural killer (NK) T cells. Also functions as an important metabolic regulator in the lactating mammary glands. Critical feed-forward regulator of insulin signaling in mammary gland lactation, directly regulates expression of insulin receptor substrate-1 (IRS-1) and insulin-induced Akt-mTOR-SREBP signaling. Transcriptional repressor of the collagen COL1A1 and COL1A2 genes. May also function as a repressor of fibronectin and possibly other extracellular matrix genes. Potent driver of brown fat development, thermogenesis and cold-induced beige fat formation. Recruits the brown fat lncRNA 1 (Blnc1):HNRNPU ribonucleoprotein complex to activate thermogenic gene expression in brown and beige adipocytes. This is Zinc finger and BTB domain-containing protein 7B from Homo sapiens (Human).